The sequence spans 284 residues: Nucleotide-binding protein Shal_3708 (284 aa).

8–15 provides a ligand contact to ATP; the sequence is GRSGSGKS. 56–59 lines the GTP pocket; the sequence is DIRN.

This sequence belongs to the RapZ-like family.

Displays ATPase and GTPase activities. This Shewanella halifaxensis (strain HAW-EB4) protein is Nucleotide-binding protein Shal_3708.